A 391-amino-acid chain; its full sequence is Argininosuccinate synthase (391 aa).

Ala-6–Thr-14 serves as a coordination point for ATP. Residue Tyr-84 coordinates L-citrulline. Residue Gly-114 coordinates ATP. Positions 116, 120, and 121 each coordinate L-aspartate. L-citrulline is bound at residue Asn-120. Arg-124, Ser-171, Ser-180, Glu-253, and Tyr-265 together coordinate L-citrulline.

This sequence belongs to the argininosuccinate synthase family. Type 1 subfamily. Homotetramer.

The protein localises to the cytoplasm. The enzyme catalyses L-citrulline + L-aspartate + ATP = 2-(N(omega)-L-arginino)succinate + AMP + diphosphate + H(+). The protein operates within amino-acid biosynthesis; L-arginine biosynthesis; L-arginine from L-ornithine and carbamoyl phosphate: step 2/3. This chain is Argininosuccinate synthase, found in Sulfolobus acidocaldarius (strain ATCC 33909 / DSM 639 / JCM 8929 / NBRC 15157 / NCIMB 11770).